The chain runs to 536 residues: SNW domain-containing protein 1 (536 aa).

Residues 1-46 are disordered; the sequence is MALTSFLPAPTQLSQDQLEAEEKARSQRSRQTSLVSSRREPPPYGY. A2 carries the N-acetylalanine modification. Residue S14 is modified to Phosphoserine. Residue K23 forms a Glycyl lysine isopeptide (Lys-Gly) (interchain with G-Cter in SUMO2) linkage. Positions 59-79 are interaction with PPIL1; it reads GDGGAFPEIHVAQYPLDMGRK. Glycyl lysine isopeptide (Lys-Gly) (interchain with G-Cter in SUMO2) cross-links involve residues K81, K97, K115, K122, K141, K158, and K170. The SNW stretch occupies residues 174–339; sequence AQYIRYTPSQ…KARERRAGIK (166 aa). Residues S182 and S190 each carry the phosphoserine modification. Residue K193 forms a Glycyl lysine isopeptide (Lys-Gly) (interchain with G-Cter in SUMO2) linkage. The tract at residues 209–234 is disordered; sequence PPRFKINKKIPRGPPSPPAPVMHSPS. 3 positions are modified to phosphoserine: S224, S232, and S234. Residues K240, K258, K286, K339, K344, K416, and K441 each participate in a glycyl lysine isopeptide (Lys-Gly) (interchain with G-Cter in SUMO2) cross-link. The tract at residues 311–386 is disordered; it reads KMAQKEKEKH…RSKLQRNENR (76 aa). S446 bears the Phosphoserine mark. K452 participates in a covalent cross-link: Glycyl lysine isopeptide (Lys-Gly) (interchain with G-Cter in SUMO2). Basic and acidic residues-rich tracts occupy residues 469 to 489 and 503 to 530; these read TNRF…RGRE and KFLE…EHEG. Residues 469-536 form a disordered region; the sequence is TNRFVPDKEF…EHEGKKRRKE (68 aa). Residues S479 and S481 each carry the phosphoserine modification. A Glycyl lysine isopeptide (Lys-Gly) (interchain with G-Cter in SUMO2) cross-link involves residue K509.

This sequence belongs to the SNW family. Identified in the spliceosome C complex. Associates with U4/U6-U5 tri-small nuclear ribonucleoproteins (U4/U6-U5 tri-snRNPs). Component of the minor spliceosome, which splices U12-type introns. Interacts with SKI, SMAD2,SMAD3, RBPJ, RB1, PABPN1, MAGEA1, SIRT1, FOXN3, U2AF2, PPIL1, DAXX and ATP1B4. Interacts with VDR and RXRA; preferentially associates with VDR:RXRA heterodimers. Interacts with NCOR2. Interacts with MAML1. Interacts with NOTCH1 NICD; the interaction involves multimerized NOTCH1 NICD. Forms a complex with NOTCH1 NICD and MAML1; the association is dissociated by RBPJ. Associates with positive transcription elongation factor b (P-TEFb). Component of the SNARP complex which consists at least of SNIP1, SNW1, THRAP3, BCLAF1 and PNN.

The protein localises to the nucleus. Functionally, involved in pre-mRNA splicing as component of the spliceosome. As a component of the minor spliceosome, involved in the splicing of U12-type introns in pre-mRNAs. Required in the specific splicing of CDKN1A pre-mRNA; the function probably involves the recruitment of U2AF2 to the mRNA. May recruit PPIL1 to the spliceosome. May be involved in cyclin-D1/CCND1 mRNA stability through the SNARP complex which associates with both the 3'end of the CCND1 gene and its mRNA. Involved in transcriptional regulation. Modulates TGF-beta-mediated transcription via association with SMAD proteins, MYOD1-mediated transcription via association with PABPN1, RB1-mediated transcriptional repression, and retinoid-X receptor (RXR)- and vitamin D receptor (VDR)-dependent gene transcription in a cell line-specific manner probably involving coactivators NCOA1 and GRIP1. Is involved in NOTCH1-mediated transcriptional activation. Binds to multimerized forms of Notch intracellular domain (NICD) and is proposed to recruit transcriptional coactivators such as MAML1 to form an intermediate preactivation complex which associates with DNA-bound CBF-1/RBPJ to form a transcriptional activation complex by releasing SNW1 and redundant NOTCH1 NICD. In Pongo abelii (Sumatran orangutan), this protein is SNW domain-containing protein 1 (SNW1).